Consider the following 255-residue polypeptide: tRNA1(Val) (adenine(37)-N6)-methyltransferase (255 aa).

The protein belongs to the methyltransferase superfamily. tRNA (adenine-N(6)-)-methyltransferase family.

The protein localises to the cytoplasm. The enzyme catalyses adenosine(37) in tRNA1(Val) + S-adenosyl-L-methionine = N(6)-methyladenosine(37) in tRNA1(Val) + S-adenosyl-L-homocysteine + H(+). Its function is as follows. Specifically methylates the adenine in position 37 of tRNA(1)(Val) (anticodon cmo5UAC). This Porphyromonas gingivalis (strain ATCC 33277 / DSM 20709 / CIP 103683 / JCM 12257 / NCTC 11834 / 2561) protein is tRNA1(Val) (adenine(37)-N6)-methyltransferase.